The primary structure comprises 1177 residues: DNA-directed RNA polymerase subunit beta' (1177 aa).

4 residues coordinate Zn(2+): cysteine 60, cysteine 62, cysteine 75, and cysteine 78. Positions 450, 452, and 454 each coordinate Mg(2+). Zn(2+) contacts are provided by cysteine 795, cysteine 869, cysteine 876, and cysteine 879.

Belongs to the RNA polymerase beta' chain family. The RNAP catalytic core consists of 2 alpha, 1 beta, 1 beta' and 1 omega subunit. When a sigma factor is associated with the core the holoenzyme is formed, which can initiate transcription. Mg(2+) is required as a cofactor. The cofactor is Zn(2+).

The catalysed reaction is RNA(n) + a ribonucleoside 5'-triphosphate = RNA(n+1) + diphosphate. Its function is as follows. DNA-dependent RNA polymerase catalyzes the transcription of DNA into RNA using the four ribonucleoside triphosphates as substrates. The polypeptide is DNA-directed RNA polymerase subunit beta' (Clostridium botulinum (strain Alaska E43 / Type E3)).